Reading from the N-terminus, the 527-residue chain is Amino acid transporter heavy chain SLC3A2 (527 aa).

Residues Met1 to Ala31 form a disordered region. Residues Met1–Arg75 lie on the Cytoplasmic side of the membrane. A Phosphoserine modification is found at Ser2. Residue Thr5 is modified to Phosphothreonine. A compositionally biased stretch (basic and acidic residues) spans Val7–Lys21. A Glycyl lysine isopeptide (Lys-Gly) (interchain with G-Cter in ubiquitin) cross-link involves residue Lys42. At Ser58 the chain carries Phosphoserine. Residue Lys59 forms a Glycyl lysine isopeptide (Lys-Gly) (interchain with G-Cter in SUMO2) linkage. The helical; Signal-anchor for type II membrane protein transmembrane segment at Trp76–Val98 threads the bilayer. Residues Arg99 to Ala527 lie on the Extracellular side of the membrane. Asn166, Asn249, Asn259, and Asn263 each carry an N-linked (GlcNAc...) asparagine glycan. Ser300 carries the post-translational modification Phosphoserine. Residues Asn318, Asn386, and Asn400 are each glycosylated (N-linked (GlcNAc...) asparagine). Ser421 carries the phosphoserine modification. Asn510 carries an N-linked (GlcNAc...) asparagine glycan.

Belongs to the SLC3A transporter family. As to quaternary structure, disulfide-linked heterodimer with a non-glycosylated light chain (SLC7A5, SLC7A6, SLC7A7, SLC7A8, SLC7A10 or SLC7A11). Interacts with TLCD3A/CT120 and ICAM1. Constitutively and specifically associates with beta-1 integrins (alpha-2/beta-1, alpha-3/beta-1, alpha-5/beta-1 and alpha-6/beta-1), but minimally with alpha-4/beta-1. Interacts with LAPTM4B; recruits SLC3A2 and SLC7A5 to lysosomes to promote leucine uptake into these organelles and is required for mTORC1 activation. Post-translationally, phosphorylation on Ser-300 and on Ser-421 by ecto-protein kinases favors heterotypic cell-cell interactions. N-glycosylated; N-glycosylation is crucial for trafficking and stability of SLC3A2 to the plasma membrane. In brain expressed on capillary endothelia in cerebral cortex (at protein level). Highest expression in kidney, jejunum, ileum, colon, placenta, testis and spleen. Lower levels found in liver, lung and brain with weakest expression in heart. Expressed in retina, inner blood-retinal barrier of retina, retinal vascular endothelial cells. Also expressed in C6 glioma cells and in the retinal capillary endothelial cell line TR-iBRB2.

Its subcellular location is the apical cell membrane. The protein localises to the cell membrane. The protein resides in the cell junction. It localises to the lysosome membrane. It is found in the melanosome. Its subcellular location is the basolateral cell membrane. Its function is as follows. Acts as a chaperone that facilitates biogenesis and trafficking of functional transporters heterodimers to the plasma membrane. Forms heterodimer with SLC7 family transporters (SLC7A5, SLC7A6, SLC7A7, SLC7A8, SLC7A10 and SLC7A11), a group of amino-acid antiporters. Heterodimers function as amino acids exchangers, the specificity of the substrate depending on the SLC7A subunit. Heterodimers formed by SLC3A2/SLC7A6 or SLC3A2/SLC7A7 mediate the uptake of dibasic amino acids. Heterodimer SLC3A2/SLC7A11 functions as an antiporter by mediating the exchange of extracellular anionic L-cystine and intracellular L-glutamate across the cellular plasma membrane. SLC3A2/SLC7A10 translocates small neutral L- and D-amino acids across the plasma membrane. SLC3A2/SLC75 or SLC3A2/SLC7A8 translocates neutral amino acids with broad specificity, thyroid hormones and L-DOPA. SLC3A2 is essential for plasma membrane localization, stability, and the transport activity of SLC7A5 and SLC7A8. When associated with LAPTM4B, the heterodimer SLC7A5 is recruited to lysosomes to promote leucine uptake into these organelles, and thereby mediates mTORC1 activation. Modulates integrin-related signaling and is essential for integrin-dependent cell spreading, migration and tumor progression. The polypeptide is Amino acid transporter heavy chain SLC3A2 (Rattus norvegicus (Rat)).